We begin with the raw amino-acid sequence, 1366 residues long: Agglutinin-like protein 6 (1366 aa).

The first 18 residues, 1–18 (MKTVILLHLFFYCTIAMA), serve as a signal peptide directing secretion. 4 disulfide bridges follow: C74-C151, C97-C113, C206-C301, and C228-C257. The N-linked (GlcNAc...) asparagine glycan is linked to N294. ALS repeat units lie at residues 368-399 (TTIT…VDVP), 404-435 (TTIT…VQVP), 441-472 (VTTT…IKEP), 477-508 (VTTT…VREP), 513-544 (VTTT…VREP), and 549-580 (VTTT…IHDP). Residues 449 to 470 (GSVPTTETVTTGPQGTDSVIIK) form a disordered region. Low complexity predominate over residues 451–464 (VPTTETVTTGPQGT). 3 disordered regions span residues 583–658 (ESSS…TSES), 758–780 (LSSD…FPHT), and 804–833 (VSLT…SDQS). An N-linked (GlcNAc...) asparagine glycan is attached at N596. 2 stretches are compositionally biased toward low complexity: residues 758 to 775 (LSSD…SPSD) and 805 to 833 (SLTS…SDQS). N-linked (GlcNAc...) asparagine glycosylation occurs at N866. Disordered stretches follow at residues 874 to 915 (ESES…STVT), 928 to 976 (TGMP…TSAS), 996 to 1040 (SETS…KESS), 1081 to 1130 (EDNE…VSSV), and 1158 to 1218 (ETSL…STNN). Low complexity-rich tracts occupy residues 875–889 (SESS…ASES), 898–915 (SEST…STVT), and 940–958 (TSDV…PTSA). A compositionally biased stretch (polar residues) spans 959-969 (EQSITDNPNID). Residues 996–1021 (SETSTLSSDDSTSSDTSISSTTNSDT) show a composition bias toward low complexity. 2 stretches are compositionally biased toward polar residues: residues 1022–1040 (GNIN…KESS) and 1085–1107 (PNTF…SVLS). Low complexity-rich tracts occupy residues 1121–1130 (VTDTTTVSSV) and 1158–1177 (ETSL…SSGT). Polar residues-rich tracts occupy residues 1192 to 1202 (TSTDNRLSYST) and 1209 to 1218 (TYANSGSTNN). N1273 is a glycosylation site (N-linked (GlcNAc...) asparagine). S1345 carries GPI-anchor amidated serine lipidation. A propeptide spans 1346–1366 (SATKHPSWLLKFISVALFFFL) (removed in mature form).

It belongs to the ALS family. In terms of processing, the GPI-anchor is attached to the protein in the endoplasmic reticulum and serves to target the protein to the cell surface. There, the glucosamine-inositol phospholipid moiety is cleaved off and the GPI-modified mannoprotein is covalently attached via its lipidless GPI glycan remnant to the 1,6-beta-glucan of the outer cell wall layer.

The protein resides in the cell membrane. It is found in the secreted. Its subcellular location is the cell wall. In terms of biological role, cell surface adhesion protein which mediates both yeast-to-host tissue adherence and yeast aggregation. Plays an important role in the pathogenesis of C.albicans infections. The protein is Agglutinin-like protein 6 (ALS6) of Candida albicans (strain SC5314 / ATCC MYA-2876) (Yeast).